The sequence spans 1223 residues: Rho family-interacting cell polarization regulator 1 (1223 aa).

S22 is modified (phosphoserine). Residues 83-112 are a coiled coil; sequence RGLTAYLEVHQQEQEKLQRQIKESKRNSRL. Residues S345 and S347 each carry the phosphoserine modification. At T351 the chain carries Phosphothreonine. Positions 371–411 are disordered; sequence NGTAWSLSSESSDDSSSPQLSGTARHSTPKPLVQQPEPLPV. 2 stretches are compositionally biased toward low complexity: residues 376–391 and 399–411; these read SLSSESSDDSSSPQLS and PKPLVQQPEPLPV. S451, S454, and S468 each carry phosphoserine. Composition is skewed to low complexity over residues 566 to 586 and 595 to 655; these read TTIGSAHTTTPSPLTSTGSVP and TPSP…TSPT. Disordered regions lie at residues 566–771 and 856–887; these read TTIG…QHSE and FLNDDEDEDNDGPGDRHTSSPEVVAEDRLDSS. The segment covering 656–665 has biased composition (polar residues); it reads QEAKMSTHTT. The segment covering 673-688 has biased composition (low complexity); that stretch reads TTTSPISTTESPSPST. 2 stretches are compositionally biased toward polar residues: residues 693-703 and 725-741; these read ISSSSAESTGP and ASCTSYQSLASSGSKPL. S748 bears the Phosphoserine mark. Residues 748–767 are compositionally biased toward low complexity; sequence SPEQIPKSPSSSPSSSAPEP. Residues 858 to 867 are compositionally biased toward acidic residues; it reads NDDEDEDNDG. The span at 868–885 shows a compositional bias: basic and acidic residues; the sequence is PGDRHTSSPEVVAEDRLD. A phosphoserine mark is found at S874 and S875.

This sequence belongs to the RIPOR family. Interacts (via N-terminus) with RHOA (GTP-bound form); this interaction links active RHOA to STK24 and STK26 kinases. Interacts with RHOB. Interacts with RHOC. Interacts (via C-terminus) with PDCD10; this interaction occurs in a Rho-independent manner. Interacts (via C-terminus) with STK24; this interaction occurs in a PDCD10-dependent and Rho-independent manner. Interacts (via C-terminus) with STK26; this interaction occurs in a PDCD10-dependent and Rho-independent manner. Interacts (via N-terminus) with 14-3-3 proteins; these interactions occur in a Rho-dependent manner. Expressed in the kidney exclusively by glomerular podocytes.

The protein localises to the cytoplasm. It localises to the golgi apparatus. Its function is as follows. Downstream effector protein for Rho-type small GTPases that plays a role in cell polarity and directional migration. Acts as an adapter protein, linking active Rho proteins to STK24 and STK26 kinases, and hence positively regulates Golgi reorientation in polarized cell migration upon Rho activation. Involved in the subcellular relocation of STK26 from the Golgi to cytoplasm punctae in a Rho- and PDCD10-dependent manner upon serum stimulation. The protein is Rho family-interacting cell polarization regulator 1 of Mus musculus (Mouse).